A 137-amino-acid polypeptide reads, in one-letter code: Nucleoside diphosphate kinase (137 aa).

The ATP site is built by Lys9, Phe57, Arg85, Thr91, Arg102, and Asn112. The active-site Pros-phosphohistidine intermediate is His115.

It belongs to the NDK family. Homotetramer. It depends on Mg(2+) as a cofactor.

The protein localises to the cytoplasm. The enzyme catalyses a 2'-deoxyribonucleoside 5'-diphosphate + ATP = a 2'-deoxyribonucleoside 5'-triphosphate + ADP. It carries out the reaction a ribonucleoside 5'-diphosphate + ATP = a ribonucleoside 5'-triphosphate + ADP. In terms of biological role, major role in the synthesis of nucleoside triphosphates other than ATP. The ATP gamma phosphate is transferred to the NDP beta phosphate via a ping-pong mechanism, using a phosphorylated active-site intermediate. The chain is Nucleoside diphosphate kinase from Campylobacter lari (strain RM2100 / D67 / ATCC BAA-1060).